The primary structure comprises 382 residues: Flap endonuclease 1-A (382 aa).

The segment at 1–104 (MGIHGLAKLI…GELAKRSERR (104 aa)) is N-domain. Aspartate 34 contacts Mg(2+). 2 residues coordinate DNA: arginine 47 and arginine 70. Positions 86, 158, 160, 179, and 181 each coordinate Mg(2+). The tract at residues 122–253 (NIEKFTKRLV…KRAIDLIRQH (132 aa)) is I-domain. DNA is bound at residue glutamate 158. Positions 231 and 233 each coordinate DNA. Aspartate 233 is a binding site for Mg(2+). The interaction with PCNA stretch occupies residues 336–344 (TQGRLDDFF). Residues 350 to 382 (VSSTKRKEAESKGSAKKKAKTGGTPAGKFKRGK) form a disordered region.

This sequence belongs to the XPG/RAD2 endonuclease family. FEN1 subfamily. As to quaternary structure, interacts with PCNA. Three molecules of fen1 bind to one PCNA trimer with each molecule binding to one PCNA monomer. PCNA stimulates the nuclease activity without altering cleavage specificity. Mg(2+) serves as cofactor. Phosphorylated. Phosphorylation upon DNA damage induces relocalization to the nuclear plasma.

It is found in the nucleus. Its subcellular location is the nucleolus. The protein resides in the nucleoplasm. The protein localises to the mitochondrion. In terms of biological role, structure-specific nuclease with 5'-flap endonuclease and 5'-3' exonuclease activities involved in DNA replication and repair. During DNA replication, cleaves the 5'-overhanging flap structure that is generated by displacement synthesis when DNA polymerase encounters the 5'-end of a downstream Okazaki fragment. It enters the flap from the 5'-end and then tracks to cleave the flap base, leaving a nick for ligation. Also involved in the long patch base excision repair (LP-BER) pathway, by cleaving within the apurinic/apyrimidinic (AP) site-terminated flap. Acts as a genome stabilization factor that prevents flaps from equilibrating into structures that lead to duplications and deletions. Also possesses 5'-3' exonuclease activity on nicked or gapped double-stranded DNA, and exhibits RNase H activity. Also involved in replication and repair of rDNA and in repairing mitochondrial DNA. The sequence is that of Flap endonuclease 1-A (fen1-a) from Xenopus laevis (African clawed frog).